Consider the following 219-residue polypeptide: Elongation factor Ts (219 aa).

Residues 82 to 85 (TDFV) form an involved in Mg(2+) ion dislocation from EF-Tu region.

Belongs to the EF-Ts family.

The protein localises to the cytoplasm. Its function is as follows. Associates with the EF-Tu.GDP complex and induces the exchange of GDP to GTP. It remains bound to the aminoacyl-tRNA.EF-Tu.GTP complex up to the GTP hydrolysis stage on the ribosome. This is Elongation factor Ts from Anaeromyxobacter sp. (strain Fw109-5).